Consider the following 100-residue polypeptide: Small ribosomal subunit protein uS14c (100 aa).

This sequence belongs to the universal ribosomal protein uS14 family. Part of the 30S ribosomal subunit.

The protein resides in the plastid. The protein localises to the chloroplast. Binds 16S rRNA, required for the assembly of 30S particles. The polypeptide is Small ribosomal subunit protein uS14c (Oenothera argillicola (Appalachian evening primrose)).